The sequence spans 242 residues: Probable transcriptional regulatory protein BURPS1710b_1385 (242 aa).

This sequence belongs to the TACO1 family.

The protein resides in the cytoplasm. This is Probable transcriptional regulatory protein BURPS1710b_1385 from Burkholderia pseudomallei (strain 1710b).